A 146-amino-acid polypeptide reads, in one-letter code: Vascular endothelial growth factor isoform GtVF (146 aa).

The N-terminal stretch at 1–24 is a signal peptide; it reads MAAYLLAVAILFCIQGWPSGTVQG. Pyrrolidone carboxylic acid is present on Q25. Cystine bridges form between C38–C80, C69–C115, and C73–C117. The tract at residues 116–146 is disordered; sequence ECRPRSRSGVDSGKRKRNPEEGEPRAKFPFV. A compositionally biased stretch (basic and acidic residues) spans 133–146; the sequence is NPEEGEPRAKFPFV.

The protein belongs to the PDGF/VEGF growth factor family. Snake venom VEGF subfamily. Homodimer; disulfide-linked. As to expression, expressed by the venom gland.

It localises to the secreted. In terms of biological role, snake venom VEGFs that may contribute to venom dispersion and prey subjugation by inducing vascular permeability and hypotension. This protein induces an increase in capillary permeability after intradermal injection, in a VEGFR-2 (KDR) dependent manner. In addition, it provokes a drastic hypotensive effect after intravenous injection. The hypotension is mediated by nitric oxide (NO), which is produced by VEGF-activated endothelium NO synthase. Also induces angiogenesis in vitro. Unlike other crotalid VEGFs, this protein probably interacts with VEGF receptor-2 (KDR). The sequence is that of Vascular endothelial growth factor isoform GtVF from Gloydius tsushimaensis (Tsushima Island pitviper).